The sequence spans 951 residues: Bifunctional glutamine synthetase adenylyltransferase/adenylyl-removing enzyme (951 aa).

An adenylyl removase region spans residues 1 to 445 (MSILPLPALP…VFDELIGDDA (445 aa)). Residues 454-951 (HSSYSSLWQD…VSWNKWLMGA (498 aa)) form an adenylyl transferase region.

Belongs to the GlnE family. It depends on Mg(2+) as a cofactor.

It carries out the reaction [glutamine synthetase]-O(4)-(5'-adenylyl)-L-tyrosine + phosphate = [glutamine synthetase]-L-tyrosine + ADP. The enzyme catalyses [glutamine synthetase]-L-tyrosine + ATP = [glutamine synthetase]-O(4)-(5'-adenylyl)-L-tyrosine + diphosphate. In terms of biological role, involved in the regulation of glutamine synthetase GlnA, a key enzyme in the process to assimilate ammonia. When cellular nitrogen levels are high, the C-terminal adenylyl transferase (AT) inactivates GlnA by covalent transfer of an adenylyl group from ATP to specific tyrosine residue of GlnA, thus reducing its activity. Conversely, when nitrogen levels are low, the N-terminal adenylyl removase (AR) activates GlnA by removing the adenylyl group by phosphorolysis, increasing its activity. The regulatory region of GlnE binds the signal transduction protein PII (GlnB) which indicates the nitrogen status of the cell. The polypeptide is Bifunctional glutamine synthetase adenylyltransferase/adenylyl-removing enzyme (Pectobacterium atrosepticum (strain SCRI 1043 / ATCC BAA-672) (Erwinia carotovora subsp. atroseptica)).